A 175-amino-acid chain; its full sequence is Inorganic pyrophosphatase (175 aa).

Positions 30, 44, and 56 each coordinate substrate. Mg(2+) is bound by residues aspartate 66, aspartate 71, and aspartate 103. Tyrosine 142 provides a ligand contact to substrate.

It belongs to the PPase family. Homohexamer. Mg(2+) serves as cofactor.

Its subcellular location is the cytoplasm. The catalysed reaction is diphosphate + H2O = 2 phosphate + H(+). Catalyzes the hydrolysis of inorganic pyrophosphate (PPi) forming two phosphate ions. This chain is Inorganic pyrophosphatase, found in Yersinia pestis.